The chain runs to 277 residues: NH(3)-dependent NAD(+) synthetase (277 aa).

Residue 36 to 43 (GLSGGIDS) participates in ATP binding. Aspartate 42 serves as a coordination point for Mg(2+). Position 118 (arginine 118) interacts with deamido-NAD(+). Residue threonine 138 coordinates ATP. Glutamate 143 contacts Mg(2+). ATP-binding residues include lysine 167 and serine 189.

This sequence belongs to the NAD synthetase family. Homodimer.

It catalyses the reaction deamido-NAD(+) + NH4(+) + ATP = AMP + diphosphate + NAD(+) + H(+). Its pathway is cofactor biosynthesis; NAD(+) biosynthesis; NAD(+) from deamido-NAD(+) (ammonia route): step 1/1. In terms of biological role, catalyzes the ATP-dependent amidation of deamido-NAD to form NAD. Uses ammonia as a nitrogen source. In Chlorobium phaeovibrioides (strain DSM 265 / 1930) (Prosthecochloris vibrioformis (strain DSM 265)), this protein is NH(3)-dependent NAD(+) synthetase.